Consider the following 92-residue polypeptide: Small ribosomal subunit protein uS19 (92 aa).

Belongs to the universal ribosomal protein uS19 family.

Protein S19 forms a complex with S13 that binds strongly to the 16S ribosomal RNA. In Roseobacter denitrificans (strain ATCC 33942 / OCh 114) (Erythrobacter sp. (strain OCh 114)), this protein is Small ribosomal subunit protein uS19.